Consider the following 469-residue polypeptide: Acyltransferase clz18 (469 aa).

7 consecutive transmembrane segments (helical) span residues 21–41, 70–90, 134–154, 253–273, 346–366, 391–411, and 424–444; these read GLLS…LGYD, LFTI…CLFF, LSLL…TGFF, ILAA…PLFW, GLIV…LYSL, IYLI…SWVW, and VGFG…AAIF.

It belongs to the acyltransferase 3 family.

It localises to the membrane. The protein operates within secondary metabolite biosynthesis. Acyltransferase; part of the gene cluster that mediates the biosynthesis of squalestatin S1 (SQS1, also known as zaragozic acid A), a heavily oxidized fungal polyketide that offers potent cholesterol lowering activity by targeting squalene synthase (SS). SQS1 is composed of a 2,8-dioxobicyclic[3.2.1]octane-3,4,5-tricarboxyclic acid core that is connected to two lipophilic polyketide arms. These initial steps feature the priming of an unusual benzoic acid starter unit onto the highly reducing polyketide synthase clz14, followed by oxaloacetate extension and product release to generate a tricarboxylic acid containing product. The phenylalanine ammonia lyase (PAL) clz10 and the acyl-CoA ligase clz12 are involved in transforming phenylalanine into benzoyl-CoA. The citrate synthase-like protein clz17 is involved in connecting the C-alpha-carbons of the hexaketide chain and oxaloacetate to afford the tricarboxylic acid unit. The potential hydrolytic enzymes, clz11 and clz13, are in close proximity to pks2 and may participate in product release. On the other side, the tetraketide arm is synthesized by a the squalestatin tetraketide synthase clz2 and enzymatically esterified to the core in the last biosynthetic step, by the acetyltransferase clz6. The biosynthesis of the tetraketide must involve 3 rounds of chain extension. After the first and second rounds methyl-transfer occurs, and in all rounds of extension the ketoreductase and dehydratase are active. The enoyl reductase and C-MeT of clz2 are not active in the final round of extension. The acetyltransferase clz6 appears to have a broad substrate selectivity for its acyl CoA substrate, allowing the in vitro synthesis of novel squalestatins. The biosynthesis of SQS1 requires several oxidative steps likely performed by oxidoreductases clz3, clz15 and clz16. Finally, in support of the identification of the cluster as being responsible for SQS1 production, the cluster contains a gene encoding a putative squalene synthase (SS) clz20, suggesting a likely mechanism for self-resistance. This is Acyltransferase clz18 from Cochliobolus lunatus (Filamentous fungus).